Reading from the N-terminus, the 427-residue chain is Serine--tRNA ligase (427 aa).

An L-serine-binding site is contributed by 231–233 (TAE). 262-264 (RSE) contacts ATP. Glutamate 285 lines the L-serine pocket. Residue 349–352 (EISS) coordinates ATP. Serine 385 provides a ligand contact to L-serine.

Belongs to the class-II aminoacyl-tRNA synthetase family. Type-1 seryl-tRNA synthetase subfamily. In terms of assembly, homodimer. The tRNA molecule binds across the dimer.

The protein resides in the cytoplasm. It catalyses the reaction tRNA(Ser) + L-serine + ATP = L-seryl-tRNA(Ser) + AMP + diphosphate + H(+). The catalysed reaction is tRNA(Sec) + L-serine + ATP = L-seryl-tRNA(Sec) + AMP + diphosphate + H(+). It participates in aminoacyl-tRNA biosynthesis; selenocysteinyl-tRNA(Sec) biosynthesis; L-seryl-tRNA(Sec) from L-serine and tRNA(Sec): step 1/1. Its function is as follows. Catalyzes the attachment of serine to tRNA(Ser). Is also able to aminoacylate tRNA(Sec) with serine, to form the misacylated tRNA L-seryl-tRNA(Sec), which will be further converted into selenocysteinyl-tRNA(Sec). This Rhizobium etli (strain CIAT 652) protein is Serine--tRNA ligase.